Here is a 212-residue protein sequence, read N- to C-terminus: NAD(P)H-hydrate epimerase (212 aa).

In terms of domain architecture, YjeF N-terminal spans 10-212 (MRSLERAAIA…IGVIVKPIGL (203 aa)). (6S)-NADPHX is bound at residue 65–69 (NNGGD). 2 residues coordinate K(+): Asn-66 and Asp-129. Residues 133-139 (GLGLTRP) and Asp-161 each bind (6S)-NADPHX. Residue Ser-164 coordinates K(+).

The protein belongs to the NnrE/AIBP family. The cofactor is K(+).

It catalyses the reaction (6R)-NADHX = (6S)-NADHX. It carries out the reaction (6R)-NADPHX = (6S)-NADPHX. Its function is as follows. Catalyzes the epimerization of the S- and R-forms of NAD(P)HX, a damaged form of NAD(P)H that is a result of enzymatic or heat-dependent hydration. This is a prerequisite for the S-specific NAD(P)H-hydrate dehydratase to allow the repair of both epimers of NAD(P)HX. The chain is NAD(P)H-hydrate epimerase from Rhodobacter capsulatus (strain ATCC BAA-309 / NBRC 16581 / SB1003).